The chain runs to 147 residues: Small ribosomal subunit protein uS13 (147 aa).

The segment at 115–147 (SYKGRRHEAGLPVRGQRTKSTFRNSSSVGVKRS) is disordered. Residues 132-147 (TKSTFRNSSSVGVKRS) are compositionally biased toward polar residues.

It belongs to the universal ribosomal protein uS13 family. In terms of assembly, part of the 30S ribosomal subunit. Forms a loose heterodimer with protein S19. Forms two bridges to the 50S subunit in the 70S ribosome.

Located at the top of the head of the 30S subunit, it contacts several helices of the 16S rRNA. In the 70S ribosome it contacts the 23S rRNA (bridge B1a) and protein L5 of the 50S subunit (bridge B1b), connecting the 2 subunits; these bridges are implicated in subunit movement. The chain is Small ribosomal subunit protein uS13 from Methanobrevibacter smithii (strain ATCC 35061 / DSM 861 / OCM 144 / PS).